The chain runs to 57 residues: Andropin (57 aa).

The signal sequence occupies residues 1 to 23; sequence MKYFVVLVVLALILAITVDPSDA.

This sequence belongs to the andropin family. In terms of tissue distribution, ejaculatory duct of adult males.

Its subcellular location is the secreted. Functionally, male-specific peptide with moderate activity against Gram-positive bacteria. In Drosophila sechellia (Fruit fly), this protein is Andropin (Anp).